Here is a 221-residue protein sequence, read N- to C-terminus: Kinetochore protein Spc25 (221 aa).

The stretch at 63–114 forms a coiled coil; sequence VIQRREEMEKRVSFMEELAQEVEATKQRNLVMREQIKQQKMLVRQRKNEIME.

This sequence belongs to the SPC25 family. Component of the Ndc80 complex, which is composed of Ndc80, Nuf2 and Spc25.

It is found in the nucleus. The protein resides in the chromosome. The protein localises to the centromere. It localises to the kinetochore. Acts as a component of the essential kinetochore-associated Ndc80 complex, which is required for chromosome segregation and spindle checkpoint activity during meiosis and mitosis. Required for kinetochore integrity and the organization of stable microtubule binding sites in the outer plate of the kinetochore. Participates in SAC signaling that responds specifically to disruptions in spindle microtubule dynamics. The NDC80 complex synergistically enhances the affinity of the SKA1 complex for microtubules and may allow the NDC80 complex to track depolymerizing microtubules. This is Kinetochore protein Spc25 from Drosophila eugracilis (Fruit fly).